We begin with the raw amino-acid sequence, 947 residues long: Bifunctional glutamine synthetase adenylyltransferase/adenylyl-removing enzyme (947 aa).

The interval 1 to 440 is adenylyl removase; the sequence is MTPLSSPLSQ…VFNELIGDDE (440 aa). The tract at residues 450–947 is adenylyl transferase; the sequence is SEPWREVWQD…ASWRKWLVAV (498 aa).

This sequence belongs to the GlnE family. The cofactor is Mg(2+).

The catalysed reaction is [glutamine synthetase]-O(4)-(5'-adenylyl)-L-tyrosine + phosphate = [glutamine synthetase]-L-tyrosine + ADP. The enzyme catalyses [glutamine synthetase]-L-tyrosine + ATP = [glutamine synthetase]-O(4)-(5'-adenylyl)-L-tyrosine + diphosphate. Functionally, involved in the regulation of glutamine synthetase GlnA, a key enzyme in the process to assimilate ammonia. When cellular nitrogen levels are high, the C-terminal adenylyl transferase (AT) inactivates GlnA by covalent transfer of an adenylyl group from ATP to specific tyrosine residue of GlnA, thus reducing its activity. Conversely, when nitrogen levels are low, the N-terminal adenylyl removase (AR) activates GlnA by removing the adenylyl group by phosphorolysis, increasing its activity. The regulatory region of GlnE binds the signal transduction protein PII (GlnB) which indicates the nitrogen status of the cell. This is Bifunctional glutamine synthetase adenylyltransferase/adenylyl-removing enzyme from Salmonella paratyphi A (strain ATCC 9150 / SARB42).